Reading from the N-terminus, the 96-residue chain is CLAVATA3/ESR (CLE)-related protein 43 (96 aa).

Positions 1–28 are cleaved as a signal peptide; sequence MGCRDILLTFSVALLLISLFQIWLFREG. Positions 71–96 are disordered; sequence FGLNNTNSRFEDSNRRIPSSPDRLHN. N-linked (GlcNAc...) asparagine glycosylation occurs at Asn74. Residues Pro88 and Pro91 each carry the hydroxyproline modification. O-linked (Ara...) hydroxyproline glycosylation occurs at Pro91.

The protein belongs to the CLV3/ESR signal peptide family. The O-glycosylation (arabinosylation) of the hydroxyproline Pro-91 enhances binding affinity of the CLE43p peptide for its receptor. In terms of tissue distribution, expressed at low levels in seedlings.

It is found in the secreted. The protein localises to the extracellular space. Extracellular signal peptide that regulates cell fate. Promotes pollen tube growth prolongation in a SKM1 and SKM2-dependent manner, especially under relatively high temperature (at 30 degrees Celsius), thus conferring tolerance against high temperature probably through the maintenance of mitochondrial activity. This is CLAVATA3/ESR (CLE)-related protein 43 from Arabidopsis thaliana (Mouse-ear cress).